A 318-amino-acid chain; its full sequence is Acetyl-coenzyme A carboxylase carboxyl transferase subunit alpha (318 aa).

In terms of domain architecture, CoA carboxyltransferase C-terminal spans 38–292; sequence KLEKRLAKLE…NKTITKSLHA (255 aa).

The protein belongs to the AccA family. Acetyl-CoA carboxylase is a heterohexamer composed of biotin carboxyl carrier protein (AccB), biotin carboxylase (AccC) and two subunits each of ACCase subunit alpha (AccA) and ACCase subunit beta (AccD).

The protein resides in the cytoplasm. It carries out the reaction N(6)-carboxybiotinyl-L-lysyl-[protein] + acetyl-CoA = N(6)-biotinyl-L-lysyl-[protein] + malonyl-CoA. The protein operates within lipid metabolism; malonyl-CoA biosynthesis; malonyl-CoA from acetyl-CoA: step 1/1. Its function is as follows. Component of the acetyl coenzyme A carboxylase (ACC) complex. First, biotin carboxylase catalyzes the carboxylation of biotin on its carrier protein (BCCP) and then the CO(2) group is transferred by the carboxyltransferase to acetyl-CoA to form malonyl-CoA. The sequence is that of Acetyl-coenzyme A carboxylase carboxyl transferase subunit alpha from Listeria welshimeri serovar 6b (strain ATCC 35897 / DSM 20650 / CCUG 15529 / CIP 8149 / NCTC 11857 / SLCC 5334 / V8).